Consider the following 485-residue polypeptide: Anthranilate synthase component I-like protein (485 aa).

Residues serine 69 and 271–273 (PFA) each bind L-tryptophan. 306–307 (GT) provides a ligand contact to chorismate. Glutamate 333 contacts Mg(2+). Chorismate is bound by residues arginine 441, 455–457 (GAG), and glycine 457. Mg(2+) is bound at residue glutamate 470.

Belongs to the anthranilate synthase component I family. Tetramer of two components I and two components II. Mg(2+) serves as cofactor.

It carries out the reaction chorismate + L-glutamine = anthranilate + pyruvate + L-glutamate + H(+). It functions in the pathway amino-acid biosynthesis; L-tryptophan biosynthesis; L-tryptophan from chorismate: step 1/5. This chain is Anthranilate synthase component I-like protein (trpE2), found in Synechocystis sp. (strain ATCC 27184 / PCC 6803 / Kazusa).